The chain runs to 218 residues: N-(5'-phosphoribosyl)anthranilate isomerase (218 aa).

The protein belongs to the TrpF family.

It catalyses the reaction N-(5-phospho-beta-D-ribosyl)anthranilate = 1-(2-carboxyphenylamino)-1-deoxy-D-ribulose 5-phosphate. Its pathway is amino-acid biosynthesis; L-tryptophan biosynthesis; L-tryptophan from chorismate: step 3/5. This Desulfatibacillum aliphaticivorans protein is N-(5'-phosphoribosyl)anthranilate isomerase.